The following is a 515-amino-acid chain: Folate synthesis bifunctional protein, mitochondrial (515 aa).

A mitochondrion-targeting transit peptide spans 1 to 28; sequence MSILKCLGVRGNQLCAARNYLKVLGFSS. Positions 47 to 172 are HPPK; sequence VIALGSNVGD…PFVMAPLMDL (126 aa). The Pterin-binding domain occupies 230 to 498; the sequence is TLVMGILNLT…NVKDNLDAVK (269 aa). The tract at residues 232 to 515 is DHPS; it reads VMGILNLTPD…QKSSPIKFKQ (284 aa). Mg(2+) is bound at residue N237. Residues T277, D314, N333, D406, K451, and 486–488 each bind (7,8-dihydropterin-6-yl)methyl diphosphate; that span reads RVH.

In the N-terminal section; belongs to the HPPK family. It in the C-terminal section; belongs to the DHPS family. Homomultimer. Mg(2+) serves as cofactor.

It localises to the mitochondrion. The catalysed reaction is 6-hydroxymethyl-7,8-dihydropterin + ATP = (7,8-dihydropterin-6-yl)methyl diphosphate + AMP + H(+). The enzyme catalyses (7,8-dihydropterin-6-yl)methyl diphosphate + 4-aminobenzoate = 7,8-dihydropteroate + diphosphate. Its pathway is cofactor biosynthesis; tetrahydrofolate biosynthesis; 2-amino-4-hydroxy-6-hydroxymethyl-7,8-dihydropteridine diphosphate from 7,8-dihydroneopterin triphosphate: step 4/4. It participates in cofactor biosynthesis; tetrahydrofolate biosynthesis; 7,8-dihydrofolate from 2-amino-4-hydroxy-6-hydroxymethyl-7,8-dihydropteridine diphosphate and 4-aminobenzoate: step 1/2. Functionally, catalyzes the first two consecutive steps of tetrahydrofolate biosynthesis. The sequence is that of Folate synthesis bifunctional protein, mitochondrial from Pisum sativum (Garden pea).